The following is a 101-amino-acid chain: Small ribosomal subunit protein uS14 (101 aa).

The segment at 44 to 74 (ASRKLSRLPRDSSPVRLRNRDQVDGRPRGYV) is disordered. The segment covering 61 to 70 (RNRDQVDGRP) has biased composition (basic and acidic residues).

The protein belongs to the universal ribosomal protein uS14 family. Part of the 30S ribosomal subunit. Contacts proteins S3 and S10.

Functionally, binds 16S rRNA, required for the assembly of 30S particles and may also be responsible for determining the conformation of the 16S rRNA at the A site. The polypeptide is Small ribosomal subunit protein uS14 (Cutibacterium acnes (strain DSM 16379 / KPA171202) (Propionibacterium acnes)).